Here is a 799-residue protein sequence, read N- to C-terminus: Protein ADP-ribosyltransferase PARP3 (799 aa).

Residues 1–49 are compositionally biased toward basic and acidic residues; the sequence is MKVESRSHNVHHAHGEEEKVMTRKQKAESKAHEVEHSPKKAKVEDEKNG. The segment at 1 to 55 is disordered; the sequence is MKVESRSHNVHHAHGEEEKVMTRKQKAESKAHEVEHSPKKAKVEDEKNGHTNGKS. Positions 39 to 188 constitute a PADR1 zinc-binding domain; the sequence is KKAKVEDEKN…QRDLGLAIKP (150 aa). The region spanning 71–105 is the SAP domain; that stretch reads NEQLSLEQMKEILEANDLDSSGSDLEITRRCQDLL. Residues 108-152 form a zinc ribbon region; that stretch reads GALEKCMVCNGNMEFDGRRYGCRGFYSEWSSCTFSTREPPRKDEP. Positions 113, 116, 129, and 139 each coordinate Zn(2+). Residues 140–161 form a disordered region; that stretch reads TFSTREPPRKDEPIKLPDSVQN. The segment covering 145 to 154 has biased composition (basic and acidic residues); the sequence is EPPRKDEPIK. One can recognise a BRCT domain in the interval 189-261; the sequence is FTGMMISLMG…EPQPLESYDL (73 aa). The 101-residue stretch at 309–409 folds into the WGR domain; sequence DGKIFEKDGI…KKFQKKPLKF (101 aa). A PARP alpha-helical domain is found at 436 to 555; that stretch reads HCKLEPMVAN…DITLASHLIG (120 aa). Positions 564–795 constitute a PARP catalytic domain; sequence DPLSDTYKKL…VKYEEKDAVI (232 aa).

The protein belongs to the ARTD/PARP family.

The protein localises to the nucleus. It carries out the reaction L-aspartyl-[protein] + NAD(+) = 4-O-(ADP-D-ribosyl)-L-aspartyl-[protein] + nicotinamide. The enzyme catalyses L-glutamyl-[protein] + NAD(+) = 5-O-(ADP-D-ribosyl)-L-glutamyl-[protein] + nicotinamide. Its function is as follows. Involved in the base excision repair (BER) pathway, by catalyzing the poly(ADP-ribosyl)ation of a limited number of acceptor proteins involved in chromatin architecture and in DNA metabolism. This modification follows DNA damages and appears as an obligatory step in a detection/signaling pathway leading to the reparation of DNA strand breaks. The polypeptide is Protein ADP-ribosyltransferase PARP3 (PARP3) (Medicago truncatula (Barrel medic)).